We begin with the raw amino-acid sequence, 383 residues long: Acetylornithine deacetylase (383 aa).

His-80 contributes to the Zn(2+) binding site. Asp-82 is an active-site residue. Asp-112 is a Zn(2+) binding site. Glu-144 is a catalytic residue. Zn(2+) is bound by residues Glu-145, Glu-169, and His-355.

Belongs to the peptidase M20A family. ArgE subfamily. In terms of assembly, homodimer. Zn(2+) serves as cofactor. Requires Co(2+) as cofactor. Glutathione is required as a cofactor.

The protein localises to the cytoplasm. The enzyme catalyses N(2)-acetyl-L-ornithine + H2O = L-ornithine + acetate. It participates in amino-acid biosynthesis; L-arginine biosynthesis; L-ornithine from N(2)-acetyl-L-ornithine (linear): step 1/1. Its function is as follows. Catalyzes the hydrolysis of the amide bond of N(2)-acetylated L-amino acids. Cleaves the acetyl group from N-acetyl-L-ornithine to form L-ornithine, an intermediate in L-arginine biosynthesis pathway, and a branchpoint in the synthesis of polyamines. This chain is Acetylornithine deacetylase, found in Escherichia coli O7:K1 (strain IAI39 / ExPEC).